The following is a 442-amino-acid chain: Proline--tRNA ligase (442 aa).

This sequence belongs to the class-II aminoacyl-tRNA synthetase family. ProS type 2 subfamily. In terms of assembly, homodimer.

Its subcellular location is the cytoplasm. It carries out the reaction tRNA(Pro) + L-proline + ATP = L-prolyl-tRNA(Pro) + AMP + diphosphate. In terms of biological role, catalyzes the attachment of proline to tRNA(Pro) in a two-step reaction: proline is first activated by ATP to form Pro-AMP and then transferred to the acceptor end of tRNA(Pro). In Brucella abortus (strain S19), this protein is Proline--tRNA ligase.